The chain runs to 152 residues: Transcriptional repressor NrdR (152 aa).

Residues 3–34 (CPFCGHADTQVVDSRVSEDGASIRRRRRCLEC) fold into a zinc finger. An ATP-cone domain is found at 49 to 139 (PQVVKQDGHR…VYRSFQDVAE (91 aa)).

It belongs to the NrdR family. Requires Zn(2+) as cofactor.

Functionally, negatively regulates transcription of bacterial ribonucleotide reductase nrd genes and operons by binding to NrdR-boxes. In Laribacter hongkongensis (strain HLHK9), this protein is Transcriptional repressor NrdR.